The chain runs to 727 residues: Protein TITANIA (727 aa).

A disordered region spans residues 1-136 (MFGDSDGSKD…LASLLQPVPA (136 aa)). The span at 14-25 (GAPPSTTDPPFP) shows a compositional bias: pro residues. Basic and acidic residues predominate over residues 67–88 (DDGKHCVERDFLHLSAPKRGDP). Low complexity predominate over residues 104–117 (DSLQLSLSLNSDGP). The segment at 406–470 (ACTCSVCHKF…QFQCLACNHS (65 aa)) adopts a PHD-type zinc-finger fold. Residues 629–697 (VKCKEAEAKL…LEELKMLENS (69 aa)) adopt a coiled-coil conformation.

Widely expressed.

It is found in the nucleus. In terms of biological role, probable transcription factor that functions as a regulator of metal transporter genes responsible for essential metals delivery to shoots and normal plant growth. Required for the maintenance of metal transporter gene expression, such as IRT1, IRT2, ZIP1, ZIP9, NRAMP1 and NRAMP5. The chain is Protein TITANIA from Oryza sativa subsp. japonica (Rice).